Here is a 295-residue protein sequence, read N- to C-terminus: Bifunctional protein FolD (295 aa).

Residues 166-168, Ser-195, and Ile-236 contribute to the NADP(+) site; that span reads GRS.

This sequence belongs to the tetrahydrofolate dehydrogenase/cyclohydrolase family. In terms of assembly, homodimer.

The enzyme catalyses (6R)-5,10-methylene-5,6,7,8-tetrahydrofolate + NADP(+) = (6R)-5,10-methenyltetrahydrofolate + NADPH. It catalyses the reaction (6R)-5,10-methenyltetrahydrofolate + H2O = (6R)-10-formyltetrahydrofolate + H(+). It functions in the pathway one-carbon metabolism; tetrahydrofolate interconversion. Functionally, catalyzes the oxidation of 5,10-methylenetetrahydrofolate to 5,10-methenyltetrahydrofolate and then the hydrolysis of 5,10-methenyltetrahydrofolate to 10-formyltetrahydrofolate. The protein is Bifunctional protein FolD of Chlorobium chlorochromatii (strain CaD3).